A 421-amino-acid chain; its full sequence is D-amino acid dehydrogenase (421 aa).

Residue 3–17 (VLILGSGVIGVTSAY) participates in FAD binding.

This sequence belongs to the DadA oxidoreductase family. The cofactor is FAD.

It carries out the reaction a D-alpha-amino acid + A + H2O = a 2-oxocarboxylate + AH2 + NH4(+). Its function is as follows. Oxidative deamination of D-amino acids. In Bradyrhizobium diazoefficiens (strain JCM 10833 / BCRC 13528 / IAM 13628 / NBRC 14792 / USDA 110), this protein is D-amino acid dehydrogenase.